We begin with the raw amino-acid sequence, 588 residues long: Myc box-dependent-interacting protein 1 (588 aa).

Residue A2 is modified to N-acetylalanine. The tract at residues 2-122 (AEMGSKGVTA…DYHQKLVDQA (121 aa)) is interaction with BIN2. Coiled coils occupy residues 15-42 (ASNVQKKLTRAQEKVLQKLGKADETKDE) and 193-274 (HLVA…EKQH). Positions 29 to 276 (VLQKLGKADE…LVSLEKQHGS (248 aa)) constitute a BAR domain. Positions 279 to 355 (FTVKAQPSDN…PKHTPSKEMK (77 aa)) are disordered. 3 positions are modified to phosphoserine: S296, S298, and S304. A Phosphothreonine modification is found at T308. A phosphoserine mark is found at S324 and S332. Residues 379–422 (FEAPGPFSEQASLLDLDFEPLPPVASPVKAPTPSGQSIPWDLWE) form a clathrin-binding region. A disordered region spans residues 448–484 (PSQTAEPGPAQPAEASEVVGGAQEPGETAASEATSSS). A compositionally biased stretch (low complexity) spans 474–484 (ETAASEATSSS). In terms of domain architecture, SH3 spans 515–588 (GFMFKVQAQH…FPENFTERVQ (74 aa)).

As to quaternary structure, heterodimer with AMPH. Binds SH3GLB1. Interacts (via SH3 domain) with DNM1. Interacts with SYNJ1. Interacts (via SH3 domain) with DNM2. Interacts with CLTC. Interacts with AP2A2. Interacts with AP2B1. Interacts with MYC (via N-terminal transactivation domain); the interaction requires the integrity of the conserved MYC box regions 1 and 2. Interacts with BIN2. Interacts with SNX4. Interacts (via BAR domain) with BACE1. Binds (via BAR domain) F-actin. Post-translationally, phosphorylated by protein kinase C. As to expression, isoform 1 is expressed mainly in the brain. Isoform 2 is widely expressed.

The protein localises to the nucleus. Its subcellular location is the cytoplasm. It localises to the endosome. The protein resides in the cell membrane. It is found in the sarcolemma. The protein localises to the T-tubule. Functionally, is a key player in the control of plasma membrane curvature, and membrane shaping and remodeling. Required in muscle cells for the formation of T-tubules, tubular invaginations of the plasma membrane that function in depolarization-contraction coupling. Required in muscle cells for the formation of T-tubules, tubular invaginations of the plasma membrane that function in depolarization-contraction coupling. Is a negative regulator of endocytosis. Is also involved in the regulation of intracellular vesicles sorting, modulation of BACE1 trafficking and the control of amyloid-beta production. In neuronal circuits, endocytosis regulation may influence the internalization of PHF-tau aggregates. May be involved in the regulation of MYC activity and the control cell proliferation. The protein is Myc box-dependent-interacting protein 1 (Bin1) of Mus musculus (Mouse).